A 543-amino-acid chain; its full sequence is CTP synthase (543 aa).

Residues 1-265 (MTRYIFVTGG…DDIVVERFGL (265 aa)) are amidoligase domain. Ser-13 lines the CTP pocket. UTP is bound at residue Ser-13. ATP is bound by residues 14–19 (SLGKGI) and Asp-71. Asp-71 and Glu-139 together coordinate Mg(2+). CTP is bound by residues 146 to 148 (DIE), 186 to 191 (KTKPTQ), and Lys-222. Residues 186–191 (KTKPTQ) and Lys-222 contribute to the UTP site. The 252-residue stretch at 290 to 541 (TIAMVGKYME…VNAALAQKAR (252 aa)) folds into the Glutamine amidotransferase type-1 domain. Gly-351 is a binding site for L-glutamine. The Nucleophile; for glutamine hydrolysis role is filled by Cys-378. Residues 379 to 382 (LGMQ), Glu-402, and Arg-469 contribute to the L-glutamine site. Active-site residues include His-514 and Glu-516.

Belongs to the CTP synthase family. Homotetramer.

The catalysed reaction is UTP + L-glutamine + ATP + H2O = CTP + L-glutamate + ADP + phosphate + 2 H(+). It catalyses the reaction L-glutamine + H2O = L-glutamate + NH4(+). It carries out the reaction UTP + NH4(+) + ATP = CTP + ADP + phosphate + 2 H(+). It functions in the pathway pyrimidine metabolism; CTP biosynthesis via de novo pathway; CTP from UDP: step 2/2. Its activity is regulated as follows. Allosterically activated by GTP, when glutamine is the substrate; GTP has no effect on the reaction when ammonia is the substrate. The allosteric effector GTP functions by stabilizing the protein conformation that binds the tetrahedral intermediate(s) formed during glutamine hydrolysis. Inhibited by the product CTP, via allosteric rather than competitive inhibition. Catalyzes the ATP-dependent amination of UTP to CTP with either L-glutamine or ammonia as the source of nitrogen. Regulates intracellular CTP levels through interactions with the four ribonucleotide triphosphates. This Azotobacter vinelandii (strain DJ / ATCC BAA-1303) protein is CTP synthase.